We begin with the raw amino-acid sequence, 177 residues long: tRNA (cytidine(56)-2'-O)-methyltransferase (177 aa).

Residues Leu-84 and 109–113 each bind S-adenosyl-L-methionine; that span reads GAEKV.

It belongs to the aTrm56 family. As to quaternary structure, homodimer.

The protein localises to the cytoplasm. The catalysed reaction is cytidine(56) in tRNA + S-adenosyl-L-methionine = 2'-O-methylcytidine(56) in tRNA + S-adenosyl-L-homocysteine + H(+). Specifically catalyzes the AdoMet-dependent 2'-O-ribose methylation of cytidine at position 56 in tRNAs. In Methanosarcina barkeri (strain Fusaro / DSM 804), this protein is tRNA (cytidine(56)-2'-O)-methyltransferase.